Here is a 126-residue protein sequence, read N- to C-terminus: Muscarinic acetylcholine receptor M4 (126 aa).

The interval Met1–Ser90 is disordered. Residues Met1–Val126 lie on the Cytoplasmic side of the membrane. A compositionally biased stretch (pro residues) spans Ala28 to Pro39. Residues Asn47 to Asn57 show a composition bias toward polar residues. Residues Thr64 to Ala75 show a composition bias toward low complexity.

It belongs to the G-protein coupled receptor 1 family. Muscarinic acetylcholine receptor subfamily. CHRM4 sub-subfamily.

The protein resides in the cell membrane. It is found in the postsynaptic cell membrane. Its function is as follows. The muscarinic acetylcholine receptor mediates various cellular responses, including inhibition of adenylate cyclase, breakdown of phosphoinositides and modulation of potassium channels through the action of G proteins. Primary transducing effect is inhibition of adenylate cyclase. May couple to multiple functional responses in cell lines. The protein is Muscarinic acetylcholine receptor M4 (CHRM4) of Bos taurus (Bovine).